The chain runs to 447 residues: Na(+)-translocating NADH-quinone reductase subunit A (447 aa).

The protein belongs to the NqrA family. In terms of assembly, composed of six subunits; NqrA, NqrB, NqrC, NqrD, NqrE and NqrF.

The enzyme catalyses a ubiquinone + n Na(+)(in) + NADH + H(+) = a ubiquinol + n Na(+)(out) + NAD(+). Its function is as follows. NQR complex catalyzes the reduction of ubiquinone-1 to ubiquinol by two successive reactions, coupled with the transport of Na(+) ions from the cytoplasm to the periplasm. NqrA to NqrE are probably involved in the second step, the conversion of ubisemiquinone to ubiquinol. This Saccharophagus degradans (strain 2-40 / ATCC 43961 / DSM 17024) protein is Na(+)-translocating NADH-quinone reductase subunit A.